A 274-amino-acid chain; its full sequence is Thymidylate synthase (274 aa).

DUMP is bound at residue Arg-21. Residue His-51 participates in (6R)-5,10-methylene-5,6,7,8-tetrahydrofolate binding. Position 123 to 124 (123 to 124 (RR)) interacts with dUMP. The active-site Nucleophile is Cys-156. DUMP-binding positions include 176 to 179 (RSAD), Asn-187, and 217 to 219 (HIY). Asp-179 contributes to the (6R)-5,10-methylene-5,6,7,8-tetrahydrofolate binding site. A (6R)-5,10-methylene-5,6,7,8-tetrahydrofolate-binding site is contributed by Ser-273.

This sequence belongs to the thymidylate synthase family. Bacterial-type ThyA subfamily. In terms of assembly, homodimer.

It is found in the cytoplasm. The catalysed reaction is dUMP + (6R)-5,10-methylene-5,6,7,8-tetrahydrofolate = 7,8-dihydrofolate + dTMP. The protein operates within pyrimidine metabolism; dTTP biosynthesis. Catalyzes the reductive methylation of 2'-deoxyuridine-5'-monophosphate (dUMP) to 2'-deoxythymidine-5'-monophosphate (dTMP) while utilizing 5,10-methylenetetrahydrofolate (mTHF) as the methyl donor and reductant in the reaction, yielding dihydrofolate (DHF) as a by-product. This enzymatic reaction provides an intracellular de novo source of dTMP, an essential precursor for DNA biosynthesis. The chain is Thymidylate synthase from Francisella tularensis subsp. tularensis (strain SCHU S4 / Schu 4).